Here is a 201-residue protein sequence, read N- to C-terminus: 3-isopropylmalate dehydratase small subunit (201 aa).

Belongs to the LeuD family. LeuD type 1 subfamily. As to quaternary structure, heterodimer of LeuC and LeuD.

The catalysed reaction is (2R,3S)-3-isopropylmalate = (2S)-2-isopropylmalate. The protein operates within amino-acid biosynthesis; L-leucine biosynthesis; L-leucine from 3-methyl-2-oxobutanoate: step 2/4. In terms of biological role, catalyzes the isomerization between 2-isopropylmalate and 3-isopropylmalate, via the formation of 2-isopropylmaleate. The sequence is that of 3-isopropylmalate dehydratase small subunit from Methylorubrum populi (strain ATCC BAA-705 / NCIMB 13946 / BJ001) (Methylobacterium populi).